The sequence spans 459 residues: Uterine milk protein (459 aa).

Positions 1–25 (MSHGRMNLALSLVFILCGLFNSIFC) are cleaved as a signal peptide. Asparagine 268 is a glycosylation site (N-linked (GlcNAc...) asparagine).

It belongs to the serpin family. UTMP subfamily.

The protein is Uterine milk protein of Bos taurus (Bovine).